We begin with the raw amino-acid sequence, 578 residues long: Solute carrier family 15 member 3 (578 aa).

A compositionally biased stretch (basic and acidic residues) spans 1-15; sequence MSAPRAEEQPSRSGE. The segment at 1–27 is disordered; it reads MSAPRAEEQPSRSGERQPLVARGPRGP. The next 5 helical transmembrane spans lie at 33 to 53, 77 to 97, 102 to 122, 155 to 175, and 201 to 221; these read TAAAAVLLVQMLERAAFFGVT, LLFLGASYLLAPVGGWLADVY, LTISLSLLLYLAASGLLLTTI, PYCATTLYLVLLLLALAASSV, and WFYWSINLGAILSLLVVAFIE. The N-linked (GlcNAc...) asparagine glycan is linked to N223. Residues 232–252 form a helical membrane-spanning segment; that stretch reads IIVGLVGLAFFIFLFATPVFI. Residues 280–301 form a disordered region; the sequence is SRDSESAHLLPDQRSNQPGPSP. A helical transmembrane segment spans residues 308–328; the sequence is FQVLVKILPVMVTLVPYWMVY. N353 carries an N-linked (GlcNAc...) asparagine glycan. Transmembrane regions (helical) follow at residues 367 to 387 and 405 to 425; these read IPEAWLLLANVAVILILIPVK and LQKMALGMFFGFTSIIVAGVL. An N-linked (GlcNAc...) asparagine glycan is attached at N436. A run of 3 helical transmembrane segments spans residues 462 to 481, 494 to 514, and 538 to 558; these read YLLIGVSEIFASIPGLEFAY, GIFFCLSGVGSLLGSGLVALL, and YFFLLAGIEAVTAVLFLWIAG.

Belongs to the major facilitator superfamily. Proton-dependent oligopeptide transporter (POT/PTR) (TC 2.A.17) family. Expressed highly in bone marrow derived macrophages, and weakly in spleen and lung. Expressed in plasmacytoid dendritic cells (pDCs) in response to toll-like receptors (TLR) stimulation.

Its subcellular location is the lysosome membrane. It localises to the endosome membrane. The catalysed reaction is N-acetyl-D-muramoyl-L-alanyl-D-isoglutamine(out) + n H(+)(out) = N-acetyl-D-muramoyl-L-alanyl-D-isoglutamine(in) + n H(+)(in). It carries out the reaction glycylglycylglycine(out) + n H(+)(out) = glycylglycylglycine(in) + n H(+)(in). The enzyme catalyses carnosine(out) + n H(+)(out) = carnosine(in) + n H(+)(in). It catalyses the reaction L-histidine(out) + n H(+)(out) = L-histidine(in) + n H(+)(in). Its function is as follows. Proton-coupled amino-acid transporter that transports free histidine and certain di- and tripeptides, and is involved in innate immune response. Also able to transport carnosine. Involved in the detection of microbial pathogens by toll-like receptors (TLRs) and NOD-like receptors (NLRs), probably by mediating transport of bacterial peptidoglycans across the endolysosomal membrane: catalyzes the transport of certain bacterial peptidoglycans, such as muramyl dipeptide (MDP), the NOD2 ligand. This is Solute carrier family 15 member 3 from Mus musculus (Mouse).